Consider the following 353-residue polypeptide: Inactive ADP-ribosyltransferase ARH2 (353 aa).

S27 is modified (phosphoserine).

Belongs to the ADP-ribosylglycohydrolase family.

The protein resides in the cytoplasm. The protein localises to the myofibril. Its subcellular location is the sarcomere. Functionally, required for myofibril assembly and outgrowth of the cardiac chambers in the developing heart. Appears to be catalytically inactive, showing no activity against O-acetyl-ADP-ribose. This Rattus norvegicus (Rat) protein is Inactive ADP-ribosyltransferase ARH2 (Adprhl1).